The sequence spans 292 residues: MQWGRILTAMVTPFTADGKLDLDGARRLAAYLVDHGSDGLVVAGTTGESPTLTHEEKIALFREVKKAVGDRAAVIAGTGTNSTAASIELSREAEALGVDGLMLVVPYYNRPSQEGLYQHFKAIAAATTLPIILYNIPSRTGRNMDAATTLRLAEIKNIKAVKEASGDLDQATAILRQAPADFLVYSGDDSLTLPLMAVGGYGIISVVAHVAGEKMQAMVRAFTAGDVQGAAALHRELFPLFKALFITSNPVPVKEALQMLGLPAGPVRLPLVGATREEKEKIAAALKETGLL.

Thr-46 is a binding site for pyruvate. Tyr-134 serves as the catalytic Proton donor/acceptor. Lys-162 (schiff-base intermediate with substrate) is an active-site residue. Pyruvate is bound at residue Ile-204.

It belongs to the DapA family. Homotetramer; dimer of dimers.

Its subcellular location is the cytoplasm. It catalyses the reaction L-aspartate 4-semialdehyde + pyruvate = (2S,4S)-4-hydroxy-2,3,4,5-tetrahydrodipicolinate + H2O + H(+). It functions in the pathway amino-acid biosynthesis; L-lysine biosynthesis via DAP pathway; (S)-tetrahydrodipicolinate from L-aspartate: step 3/4. In terms of biological role, catalyzes the condensation of (S)-aspartate-beta-semialdehyde [(S)-ASA] and pyruvate to 4-hydroxy-tetrahydrodipicolinate (HTPA). This is 4-hydroxy-tetrahydrodipicolinate synthase from Moorella thermoacetica (strain ATCC 39073 / JCM 9320).